We begin with the raw amino-acid sequence, 122 residues long: uncharacterized protein (122 aa).

This is an uncharacterized protein from Homo sapiens (Human).